A 460-amino-acid chain; its full sequence is 5-hydroxytryptamine receptor 2C (460 aa).

The N-terminal stretch at 1–32 (MVNLGNAVRSLLMHLIGLLVWQFDISISPVAA) is a signal peptide. Residues 33–56 (IVTDTFNSSDGGRLFQFPDGVQNW) lie on the Extracellular side of the membrane. The helical transmembrane segment at 57-81 (PALSIVVIIIMTIGGNILVIMAVSM) threads the bilayer. Over 82 to 87 (EKKLHN) the chain is Cytoplasmic. Residues 88-112 (ATNYFLMSLAIADMLVGLLVMPLSL) traverse the membrane as a helical segment. Residues 113-129 (LAILYDYVWPLPRYLCP) are Extracellular-facing. C128 and C208 are joined by a disulfide. Residues 130–152 (VWISLDVLFSTASIMHLCAISLD) form a helical membrane-spanning segment. T140 provides a ligand contact to ergotamine. Positions 152-154 (DRY) match the DRY motif; important for ligand-induced conformation changes motif. Residues 153–168 (RYVAIRNPIEHSRFNS) lie on the Cytoplasmic side of the membrane. A helical transmembrane segment spans residues 169-190 (RTKAIMKIAIVWAISIGVSVPI). Over 191–214 (PVIGLRDESKVFVNNTTCVLNDPN) the chain is Extracellular. Residues N204 and N205 are each glycosylated (N-linked (GlcNAc...) asparagine). L210 is an ergotamine binding site. A helical membrane pass occupies residues 215–237 (FVLIGSFVAFFIPLTIMVITYFL). Residues 238 to 313 (TIYVLRRQTL…AINNEKKASK (76 aa)) lie on the Cytoplasmic side of the membrane. The interval 276 to 301 (EEENAPNPNPDQKPRRKKKEKRPRGT) is disordered. The segment covering 289–299 (PRRKKKEKRPR) has biased composition (basic residues). The helical transmembrane segment at 314 to 338 (VLGIVFFVFLIMWCPFFITNILSVL) threads the bilayer. A disulfide bond links C339 and C343. At 339–349 (CGKACNQKLME) the chain is on the extracellular side. The chain crosses the membrane as a helical span at residues 350 to 372 (KLLNVFVWIGYVCSGINPLVYTL). The NPxxY motif; important for ligand-induced conformation changes and signaling motif lies at 366 to 370 (NPLVY). Residues 373–460 (FNKIYRRAFS…NVVSERISSV (88 aa)) lie on the Cytoplasmic side of the membrane. Positions 458–460 (SSV) match the PDZ-binding motif.

It belongs to the G-protein coupled receptor 1 family. Interacts with MPDZ. Interacts with ARRB2. Interacts with MPP3; this interaction stabilizes the receptor at the plasma membrane and prevents the desensitization of the HTR2C receptor-mediated calcium response.

It localises to the cell membrane. Its function is as follows. G-protein coupled receptor for 5-hydroxytryptamine (serotonin). Also functions as a receptor for various drugs and psychoactive substances, including ergot alkaloid derivatives, 1-2,5,-dimethoxy-4-iodophenyl-2-aminopropane (DOI) and lysergic acid diethylamide (LSD). Ligand binding causes a conformation change that triggers signaling via guanine nucleotide-binding proteins (G proteins) and modulates the activity of downstream effectors. HTR2C is coupled to G(q)/G(11) G alpha proteins and activates phospholipase C-beta, releasing diacylglycerol (DAG) and inositol 1,4,5-trisphosphate (IP3) second messengers that modulate the activity of phosphatidylinositol 3-kinase and promote the release of Ca(2+) ions from intracellular stores, respectively. Beta-arrestin family members inhibit signaling via G proteins and mediate activation of alternative signaling pathways. Regulates neuronal activity via the activation of short transient receptor potential calcium channels in the brain, and thereby modulates the activation of pro-opiomelanocortin neurons and the release of CRH that then regulates the release of corticosterone. Plays a role in the regulation of appetite and eating behavior, responses to anxiogenic stimuli and stress. Plays a role in insulin sensitivity and glucose homeostasis. The polypeptide is 5-hydroxytryptamine receptor 2C (Rattus norvegicus (Rat)).